Consider the following 417-residue polypeptide: Tyrosine--tRNA ligase (417 aa).

Tyrosine 39 serves as a coordination point for L-tyrosine. The 'HIGH' region motif lies at 44 to 53 (PTASSLHAGS). The L-tyrosine site is built by tyrosine 176 and glutamine 180. Positions 236 to 240 (KMGKS) match the 'KMSKS' region motif. Lysine 239 lines the ATP pocket. The S4 RNA-binding domain occupies 350–417 (AGLLALLVQA…KKKHVLIKPL (68 aa)).

The protein belongs to the class-I aminoacyl-tRNA synthetase family. TyrS type 1 subfamily. Homodimer.

The protein localises to the cytoplasm. It catalyses the reaction tRNA(Tyr) + L-tyrosine + ATP = L-tyrosyl-tRNA(Tyr) + AMP + diphosphate + H(+). Functionally, catalyzes the attachment of tyrosine to tRNA(Tyr) in a two-step reaction: tyrosine is first activated by ATP to form Tyr-AMP and then transferred to the acceptor end of tRNA(Tyr). This Bartonella quintana (strain Toulouse) (Rochalimaea quintana) protein is Tyrosine--tRNA ligase.